We begin with the raw amino-acid sequence, 97 residues long: Large ribosomal subunit protein uL23 (97 aa).

Belongs to the universal ribosomal protein uL23 family. Part of the 50S ribosomal subunit. Contacts protein L29, and trigger factor when it is bound to the ribosome.

One of the early assembly proteins it binds 23S rRNA. One of the proteins that surrounds the polypeptide exit tunnel on the outside of the ribosome. Forms the main docking site for trigger factor binding to the ribosome. The sequence is that of Large ribosomal subunit protein uL23 from Sinorhizobium medicae (strain WSM419) (Ensifer medicae).